The sequence spans 135 residues: uncharacterized protein (135 aa).

This is an uncharacterized protein from Fowl adenovirus A serotype 1 (strain CELO / Phelps) (FAdV-1).